Reading from the N-terminus, the 522-residue chain is Berberine bridge enzyme-like Cyn d 4 (522 aa).

Residues 1 to 25 (MARSRAFAFALLICAVAASCHVALS) form the signal peptide. Residues Cys41 and Cys98 are joined by a disulfide bond. One can recognise an FAD-binding PCMH-type domain in the interval 76-252 (KTVKPLYIIT…ASWQVKLLPV (177 aa)). Asn88 is a glycosylation site (N-linked (GlcNAc...) asparagine). Residues 108–114 (VRSGGHD), Ser119, Ser152, 176–177 (VC), 181–185 (GVGGH), Phe191, Glu237, and Val242 each bind FAD. The 6-(S-cysteinyl)-8alpha-(pros-histidyl)-FAD (His-Cys) cross-link spans 113–177 (HDYEGLSYRS…PKLGFPAGVC (65 aa)). Residues Cys308 and Cys329 are joined by a disulfide bond. Asn325 and Asn354 each carry an N-linked (GlcNAc...) asparagine glycan. 461-465 (YVNYR) serves as a coordination point for FAD. Asn477 carries N-linked (GlcNAc...) asparagine glycosylation.

It belongs to the oxygen-dependent FAD-linked oxidoreductase family. As to quaternary structure, monomer. It depends on FAD as a cofactor. Post-translationally, the FAD cofactor is bound via a bicovalent 6-S-cysteinyl, 8alpha-N1-histidyl FAD linkage. The N-terminus is blocked. In terms of processing, glycosylated. N-glycosylated. Contains fucose, N-acetylglucosamine, and mannose as main carbohydrates (in a ratio of approximately 3:2:1), and a minute amount of xylose. The two most abundant oligosaccharides are Fuc(1)GlcNAc(2)Man(3) and Fuc(1)GlcNAc(2)Man(2), together comprising about 80% of the total carbohydrate content. They are structurally unusual in having a L-Fuc alpha-(1,3)-linked to Asn-linked GlcNAc without a Xyl beta-(1,2)-linked to the branching Man. The other oligosaccharides make up only 9% of the total carbohydrate content and are characterized by the presence of Xyl beta-(1,2)-linked to the branching Man. Expressed in pollen (at protein level).

This is Berberine bridge enzyme-like Cyn d 4 from Cynodon dactylon (Bermuda grass).